The sequence spans 38 residues: Large ribosomal subunit protein bL36B (38 aa).

Belongs to the bacterial ribosomal protein bL36 family.

This Prochlorococcus marinus (strain MIT 9515) protein is Large ribosomal subunit protein bL36B.